The sequence spans 393 residues: Putative outer capsid protein VP9 (393 aa).

The protein localises to the virion. The polypeptide is Putative outer capsid protein VP9 (S9) (Micromonas pusilla reovirus (isolate Netherlands/2005) (MpRV)).